A 3187-amino-acid chain; its full sequence is Cilia- and flagella-associated protein 47 (3187 aa).

The 124-residue stretch at 1746 to 1869 (SDSERILLSW…LCVYMYERLP (124 aa)) folds into the Calponin-homology (CH) domain. Residues 2024–2052 (KLTESRQYPKHDDDMSSSGSDTDQGCSDS) are disordered. The segment covering 2026 to 2037 (TESRQYPKHDDD) has biased composition (basic and acidic residues).

As to quaternary structure, interacts with CFAP65. Highly expressed in spermatzoa (at protein level).

It localises to the cytoplasm. The protein resides in the cytoskeleton. The protein localises to the flagellum basal body. In terms of biological role, plays a role in flagellar formation and sperm motility. The sequence is that of Cilia- and flagella-associated protein 47 from Homo sapiens (Human).